Reading from the N-terminus, the 410-residue chain is Peptidase T (410 aa).

H79 contributes to the Zn(2+) binding site. The active site involves D81. D142 is a binding site for Zn(2+). E176 (proton acceptor) is an active-site residue. 3 residues coordinate Zn(2+): E177, D199, and H381.

This sequence belongs to the peptidase M20B family. Requires Zn(2+) as cofactor.

The protein localises to the cytoplasm. The catalysed reaction is Release of the N-terminal residue from a tripeptide.. Functionally, cleaves the N-terminal amino acid of tripeptides. The sequence is that of Peptidase T from Bacillus cereus (strain B4264).